Reading from the N-terminus, the 514-residue chain is Deoxynucleoside triphosphate triphosphohydrolase SAMHD1 homolog (514 aa).

A disordered region spans residues 1-24; it reads MNNTFKYVNEDVSGTEGEESDYDP. K80 contributes to the GTP binding site. N83 contacts a 2'-deoxyribonucleoside 5'-triphosphate. 101 to 109 lines the GTP pocket; sequence DTEQFQRLR. Substrate contacts are provided by Q113 and R128. Residues 128–259 form the HD domain; the sequence is RFEHSIGVSH…SVDVDKFDYL (132 aa). Residues H131, H170, and D171 each contribute to the Zn(2+) site. H174 is a binding site for substrate. H196 is an active-site residue. Residues 252–258, Y258, and D262 contribute to the substrate site; that span reads DVDKFDY. D254 is a Zn(2+) binding site. Residues R276, 291-293, and N297 contribute to the a 2'-deoxyribonucleoside 5'-triphosphate site; that span reads LSK. Substrate contacts are provided by residues R305 and 309–314; that span reads HKLVYT. Residues H315 and K316 each contribute to the a 2'-deoxyribonucleoside 5'-triphosphate site. R380 and K384 together coordinate GTP.

The protein belongs to the SAMHD1 family. Homodimer; in absence of GTP and dNTP. Homotetramer; in GTP- and dNTP-bound form. Zn(2+) is required as a cofactor.

It catalyses the reaction a 2'-deoxyribonucleoside 5'-triphosphate + H2O = a 2'-deoxyribonucleoside + triphosphate + H(+). Allosterically activated and regulated via the combined actions of GTP and dNTPs (dATP, dGTP, dTTP and dCTP): Allosteric site 1 binds GTP, while allosteric site 2 binds dNTP. Allosteric activation promotes the formation of highly active homotetramers. Has deoxynucleoside triphosphate (dNTPase) activity. This is Deoxynucleoside triphosphate triphosphohydrolase SAMHD1 homolog from Dictyostelium discoideum (Social amoeba).